A 140-amino-acid chain; its full sequence is Histone H2B (140 aa).

The tract at residues Met-1–Glu-47 is disordered. N6-acetyllysine; alternate is present on Lys-7. A Glycyl lysine isopeptide (Lys-Gly) (interchain with G-Cter in SUMO); alternate cross-link involves residue Lys-7. At Lys-14 the chain carries N6-acetyllysine. The residue at position 24 (Lys-24) is an N6-acetyllysine; alternate. Lys-24 participates in a covalent cross-link: Glycyl lysine isopeptide (Lys-Gly) (interchain with G-Cter in SUMO); alternate. A Glycyl lysine isopeptide (Lys-Gly) (interchain with G-Cter in SUMO) cross-link involves residue Lys-25. Residue Lys-134 forms a Glycyl lysine isopeptide (Lys-Gly) (interchain with G-Cter in ubiquitin) linkage.

It belongs to the histone H2B family. The nucleosome is a histone octamer containing two molecules each of H2A, H2B, H3 and H4 assembled in one H3-H4 heterotetramer and two H2A-H2B heterodimers. The octamer wraps approximately 147 bp of DNA. Post-translationally, monoubiquitinated by BRE1 to form H2BK123ub1. H2BK123ub1 gives a specific tag for epigenetic transcriptional activation and is also prerequisite for H3K4me and H3K79me formation. H2BK123ub1 also modulates the formation of double-strand breaks during meiosis and is a prerequisite for DNA-damage checkpoint activation. In terms of processing, acetylated by GCN5 to form H2BK11ac and H2BK16ac. H2BK16ac can also be formed by ESA1. Acetylation of N-terminal lysines and particularly formation of H2BK11acK16ac has a positive effect on transcription. Sumoylation to form H2BK6su and probably also H2BK16su or H2BK17su, occurs preferentially near the telomeres and represses gene transcription.

The protein resides in the nucleus. Its subcellular location is the chromosome. Its function is as follows. Core component of nucleosome. Nucleosomes wrap and compact DNA into chromatin, limiting DNA accessibility to the cellular machineries which require DNA as a template. Histones thereby play a central role in transcription regulation, DNA repair, DNA replication and chromosomal stability. DNA accessibility is regulated via a complex set of post-translational modifications of histones, also called histone code, and nucleosome remodeling. The polypeptide is Histone H2B (HTB1) (Phaeosphaeria nodorum (strain SN15 / ATCC MYA-4574 / FGSC 10173) (Glume blotch fungus)).